We begin with the raw amino-acid sequence, 173 residues long: UPF0316 protein Bsph_0745 (173 aa).

The next 3 helical transmembrane spans lie at 4 to 24 (IVLI…RTIF), 31 to 51 (FLAA…LSLV), and 58 to 78 (MLAM…GAKI).

This sequence belongs to the UPF0316 family.

The protein resides in the cell membrane. The sequence is that of UPF0316 protein Bsph_0745 from Lysinibacillus sphaericus (strain C3-41).